The sequence spans 204 residues: N-(5'-phosphoribosyl)anthranilate isomerase (204 aa).

This sequence belongs to the TrpF family.

The enzyme catalyses N-(5-phospho-beta-D-ribosyl)anthranilate = 1-(2-carboxyphenylamino)-1-deoxy-D-ribulose 5-phosphate. The protein operates within amino-acid biosynthesis; L-tryptophan biosynthesis; L-tryptophan from chorismate: step 3/5. The chain is N-(5'-phosphoribosyl)anthranilate isomerase from Oceanobacillus iheyensis (strain DSM 14371 / CIP 107618 / JCM 11309 / KCTC 3954 / HTE831).